Here is a 190-residue protein sequence, read N- to C-terminus: dTTP/UTP pyrophosphatase (190 aa).

Residue aspartate 68 is the Proton acceptor of the active site.

The protein belongs to the Maf family. YhdE subfamily. A divalent metal cation serves as cofactor.

It localises to the cytoplasm. The catalysed reaction is dTTP + H2O = dTMP + diphosphate + H(+). The enzyme catalyses UTP + H2O = UMP + diphosphate + H(+). In terms of biological role, nucleoside triphosphate pyrophosphatase that hydrolyzes dTTP and UTP. May have a dual role in cell division arrest and in preventing the incorporation of modified nucleotides into cellular nucleic acids. The chain is dTTP/UTP pyrophosphatase from Acholeplasma laidlawii (strain PG-8A).